Here is a 1231-residue protein sequence, read N- to C-terminus: RNA-binding protein 33 (1231 aa).

Residues 1–13 show a composition bias toward gly residues; that stretch reads MAAALGAGGGAGA. Disordered stretches follow at residues 1 to 168 and 219 to 261; these read MAAA…EEEQ and SQVA…FKTE. At Ala-2 the chain carries N-acetylalanine. Positions 20-36 are enriched in basic and acidic residues; it reads QFDKPGAERSWRRRAAD. Positions 37 to 49 are enriched in acidic residues; the sequence is EDWDSELEDDLLG. The residue at position 41 (Ser-41) is a Phosphoserine. The span at 82-108 shows a compositional bias: polar residues; that stretch reads FSSQGVTISLNTTSGIVTSFELSDNTN. Acidic residues-rich tracts occupy residues 112 to 124 and 153 to 168; these read GEQESEYEQGDDE and LTEDQIEYGDEPEEEQ. The segment covering 224–240 has biased composition (basic and acidic residues); that stretch reads ETHEGGMETLELQKDIK. Over residues 241–252 the composition is skewed to acidic residues; it reads EESDEEDDDDEE. Ser-243 and Ser-271 each carry phosphoserine. Disordered stretches follow at residues 297–436 and 452–761; these read FEER…KNIH and PLLP…NLRE. Basic residues predominate over residues 305-316; that stretch reads KQGRYGSRRGGR. Residues 327–344 show a composition bias toward basic and acidic residues; the sequence is GDQRRDNSERGRMKEHRP. Residues 360 to 379 are compositionally biased toward pro residues; the sequence is LIPPPQPQPPPPPPPPPPQQ. Over residues 380 to 398 the composition is skewed to low complexity; it reads QPIRSLFQQQQLQPLLPLQ. The segment covering 469-483 has biased composition (pro residues); that stretch reads FPGPPEFPQHTPGPV. Residue Arg-520 is modified to Asymmetric dimethylarginine. 4 stretches are compositionally biased toward pro residues: residues 531–540, 604–618, 632–647, and 661–682; these read SPPPPPPPPT, FIPPRQPFLPSPGQP, LHPPLPPPHQPQPQPQ, and PLQPPLQPPHQPPPQHQPPPQH. Polar residues-rich tracts occupy residues 713–728 and 736–759; these read QTAQPQPSSSRMQCTP and AASQNISKRPMQQMQPTAPRNSNL. Phosphoserine occurs at positions 792 and 816. 3 disordered regions span residues 796–840, 876–932, and 998–1080; these read RAVV…ETRL, ERLA…FPGA, and ETPH…MRQQ. Positions 820-829 are enriched in basic and acidic residues; that stretch reads QPKEEAKPEA. Residues 840 to 891 adopt a coiled-coil conformation; it reads LYRLKIEEQKRLREEILKQKELRRQQQAGARKKELLERLAQQQQQQQQQQHQ. Low complexity predominate over residues 880-901; the sequence is QQQQQQQQQQHQPQQQQQQPQQ. A phosphoserine mark is found at Ser-1002 and Ser-1010. Residue Lys-1019 forms a Glycyl lysine isopeptide (Lys-Gly) (interchain with G-Cter in SUMO2) linkage. Phosphoserine occurs at positions 1032 and 1051.

Associates with the NXF1-NXT1 RNA export complex. Interacts with ALKBH5; facilitating ALKBH5 recruitment to m6A-containing transcripts. Interacts with SENP1; promoting ALKBH5 deSUMOylation and subsequent activation.

The protein resides in the nucleus. It is found in the cytoplasm. Functionally, RNA reader protein, which recognizes and binds specific RNAs, thereby regulating RNA metabolic processes, such as mRNA export, mRNA stability and/or translation. Binds a subset of intronless RNAs containing GC-rich elements, such as NORAD, and promotes their nuclear export by recruiting target RNAs to components of the NXF1-NXT1 RNA export machinery. Specifically recognizes and binds N6-methyladenosine (m6A)-containing mRNAs, promoting their demethylation by ALKBH5. Acts as an molecular adapter, which (1) promotes ALKBH5 recruitment to m6A-containing transcripts and (2) activates ALKBH5 demethylase activity by recruiting SENP1, leading to ALKBH5 deSUMOylation and subsequent activation. This chain is RNA-binding protein 33, found in Mus musculus (Mouse).